We begin with the raw amino-acid sequence, 376 residues long: Protein-tyrosine sulfotransferase 2 (376 aa).

At methionine 1 to valine 8 the chain is on the cytoplasmic side. A helical; Signal-anchor for type II membrane protein transmembrane segment spans residues leucine 9–glycine 25. Over glutamine 26–serine 376 the chain is Lumenal. Arginine 77–threonine 81 serves as a coordination point for 3'-phosphoadenylyl sulfate. Cysteine 95 and cysteine 155 are oxidised to a cystine. Glutamate 98 acts as the Proton donor/acceptor in catalysis. The interval arginine 100–arginine 104 is interaction with peptide substrate. 3'-phosphoadenylyl sulfate is bound by residues arginine 182, serine 190, and arginine 194. Cysteine 224 and cysteine 232 are disulfide-bonded. 3'-phosphoadenylyl sulfate contacts are provided by residues tyrosine 237, serine 284–asparagine 293, and lysine 299. Asparagine 342 and asparagine 367 each carry an N-linked (GlcNAc...) asparagine glycan.

It belongs to the protein sulfotransferase family. In terms of assembly, homodimer. Can also form heterodimers with TPST1. In terms of processing, N-glycosylated.

The protein resides in the golgi apparatus membrane. It carries out the reaction L-tyrosyl-[protein] + 3'-phosphoadenylyl sulfate = O-sulfo-L-tyrosine-[protein] + adenosine 3',5'-bisphosphate + H(+). In terms of biological role, catalyzes the O-sulfation of tyrosine residues within acidic motifs of polypeptides, using 3'-phosphoadenylyl sulfate (PAPS) as cosubstrate. The protein is Protein-tyrosine sulfotransferase 2 (Tpst2) of Rattus norvegicus (Rat).